Consider the following 1499-residue polypeptide: Autophagy-related protein 2 (1499 aa).

Residues 211 to 221 (EQSVPSYGSSS) are compositionally biased toward polar residues. The disordered stretch occupies residues 211 to 237 (EQSVPSYGSSSSDKEDDNTSDSEDPLS). Residues 224–234 (KEDDNTSDSED) show a composition bias toward acidic residues.

The protein belongs to the ATG2 family.

The protein resides in the preautophagosomal structure membrane. It localises to the endoplasmic reticulum membrane. It catalyses the reaction a 1,2-diacyl-sn-glycero-3-phosphocholine(in) = a 1,2-diacyl-sn-glycero-3-phosphocholine(out). The catalysed reaction is a 1,2-diacyl-sn-glycero-3-phospho-L-serine(in) = a 1,2-diacyl-sn-glycero-3-phospho-L-serine(out). The enzyme catalyses a 1,2-diacyl-sn-glycero-3-phosphoethanolamine(in) = a 1,2-diacyl-sn-glycero-3-phosphoethanolamine(out). Lipid transfer protein required for autophagosome completion and peroxisome degradation. Tethers the edge of the isolation membrane (IM) to the endoplasmic reticulum (ER) and mediates direct lipid transfer from ER to IM for IM expansion. ATG2 binds to the ER exit site (ERES), which is the membrane source for autophagosome formation, using basic residues in its N-terminal region (NR) and to the expanding edge of the IM through its C-terminal region. The latter binding is assisted by an ATG18-PtdIns3P interaction. ATG2 then extracts phospholipids from the membrane source using its NR and transfers them to ATG9 to the IM through its predicted beta-sheet-rich structure for membrane expansion. In Kluyveromyces marxianus (strain DMKU3-1042 / BCC 29191 / NBRC 104275) (Yeast), this protein is Autophagy-related protein 2.